Reading from the N-terminus, the 261-residue chain is ATP synthase subunit a (261 aa).

6 helical membrane passes run I45–L65, V107–F127, M133–M153, M162–I182, I209–I229, and L232–L252.

Belongs to the ATPase A chain family. As to quaternary structure, F-type ATPases have 2 components, CF(1) - the catalytic core - and CF(0) - the membrane proton channel. CF(1) has five subunits: alpha(3), beta(3), gamma(1), delta(1), epsilon(1). CF(0) has four main subunits: a, b, b' and c.

Its subcellular location is the cell inner membrane. Key component of the proton channel; it plays a direct role in the translocation of protons across the membrane. The sequence is that of ATP synthase subunit a from Cereibacter sphaeroides (strain ATCC 17029 / ATH 2.4.9) (Rhodobacter sphaeroides).